The following is a 337-amino-acid chain: SNTRVEETMKTLNVGKEDLLMWSIRQQCEVGEELIDRWGSDSDDCFRDNEGRGQWVKGKELVKRQNNNHFAHHTCNKSWRCGISTSKMYSKLECQDDTDECQVYILDAEGNPINVTVDTVLHRDGVSMILKQKSTFTTRQIKAACLLIKDDKNNPESVTREHCLIDNDIYDLSKNTWNCKFNRCIKRKVEHRVKKRPPTWRHNVRAKYTEGDTATKGDLMHIQEELMYENDLLKMNIELMHAHINKLNNMLHDLIVSVAKVDERLIGNLMNNSVSSTFLSDDTFLLMPCTNPPAHTSNCYNNSIYKEGRWVANTDSSQCIDFSNYKELAIDDDVEIL.

N-linked (GlcNAc...) asparagine; by host glycosylation is found at Asn-76, Asn-114, Asn-271, and Asn-301.

The protein belongs to the baculoviridae gp64 family. Post-translationally, palmitoylated.

It is found in the virion membrane. Its subcellular location is the host cell membrane. Envelope phosphoglycoprotein which mediates the fusion of viral and host endosomal membranes leading to virus entry into the host cell. The polypeptide is Major envelope glycoprotein (GP67) (Lepidoptera (butterflies and moths)).